The chain runs to 90 residues: Cell division topological specificity factor (90 aa).

The protein belongs to the MinE family.

Its function is as follows. Prevents the cell division inhibition by proteins MinC and MinD at internal division sites while permitting inhibition at polar sites. This ensures cell division at the proper site by restricting the formation of a division septum at the midpoint of the long axis of the cell. This chain is Cell division topological specificity factor, found in Clostridium perfringens (strain SM101 / Type A).